A 507-amino-acid chain; its full sequence is ATP synthase subunit alpha, chloroplastic (507 aa).

170 to 177 is a binding site for ATP; that stretch reads GDRQTGKT.

It belongs to the ATPase alpha/beta chains family. As to quaternary structure, F-type ATPases have 2 components, CF(1) - the catalytic core - and CF(0) - the membrane proton channel. CF(1) has five subunits: alpha(3), beta(3), gamma(1), delta(1), epsilon(1). CF(0) has four main subunits: a, b, b' and c.

Its subcellular location is the plastid. It localises to the chloroplast thylakoid membrane. The catalysed reaction is ATP + H2O + 4 H(+)(in) = ADP + phosphate + 5 H(+)(out). Produces ATP from ADP in the presence of a proton gradient across the membrane. The alpha chain is a regulatory subunit. The protein is ATP synthase subunit alpha, chloroplastic of Nymphaea alba (White water-lily).